We begin with the raw amino-acid sequence, 415 residues long: NAD-dependent protein deacetylase hst4 (415 aa).

Residues 1-26 are disordered; that stretch reads MKVEEHVPLIQESRKRKCQSSENASK. The Deacetylase sirtuin-type domain maps to 40 to 337; it reads TGNENVDLSP…RRLKPLLDAP (298 aa). NAD(+)-binding positions include 65–84 and 153–156; these read GAGI…EGLF and QNID. His-184 acts as the Proton acceptor in catalysis. Residues Cys-192, Cys-195, Cys-214, and Cys-217 each contribute to the Zn(2+) site. NAD(+) is bound by residues 273-275, 303-305, and Leu-323; these read GTS and NYD.

Belongs to the sirtuin family. Class I subfamily. Zn(2+) serves as cofactor.

The protein resides in the nucleus. The protein localises to the nucleolus. The catalysed reaction is N(6)-acetyl-L-lysyl-[protein] + NAD(+) + H2O = 2''-O-acetyl-ADP-D-ribose + nicotinamide + L-lysyl-[protein]. Its function is as follows. NAD-dependent histone deacetylase, which contributes to both telomeric and centromeric silencing, proper cell cycle progression, DNA damage control, recombination, and genomic maintenance. The polypeptide is NAD-dependent protein deacetylase hst4 (hst4) (Schizosaccharomyces pombe (strain 972 / ATCC 24843) (Fission yeast)).